We begin with the raw amino-acid sequence, 572 residues long: MMSVKIKRSVYADMFGPTTGDKVRLADTDLIIEVEKDFTVYGEEVKFGGGKVIRDGMGQSQVTNKQGAADTVITNALIVDHWGIVKADVAIKDGMISAIGKAGNPDIQPGVTIIIGPGTDVIAGEGKILTAGGFDSHIHFICPQQIEHALMSGVTSMLGGGTGPSHGTFATTCTPGPWHMGRMIQSFDAFPVNLGISGKGNASRPAPLVEMIKGGACALKLHEDWGTTPAAIDNCLSVADDYDIQVMIHTDTLNESGFVEDTIKAFKGRTIHAFHTEGAGGGHAPDIIKVAGLKNVLPSSTNPTRPFTRNTIDEHLDMLMVCHHLDPSIAEDLAFAESRIRKETIAAEDILHDLGALSMMSSDSQAMGRLGEVIIRTWQTADKMKKQRGSLPQDKGKDNDNFRVKRYIAKYTINPAIAHGVSKLIGSVEKGKLADLVLWSPAFFGVKPDCIVKGGTIVAAPMGDPNASIPTPQPVHYQPMFGAFGKARTASSVVFTSKAAITGGLARKLGIEKKLYAVQNTRGRISKKSMIHNDATPNIEVDPETYEVRADGELLTCAPAEVLPMAQRYFMY.

The Urease domain occupies 132–572 (GGFDSHIHFI…LPMAQRYFMY (441 aa)). The Ni(2+) site is built by His137, His139, and Lys220. N6-carboxylysine is present on Lys220. Position 222 (His222) interacts with substrate. Positions 249 and 275 each coordinate Ni(2+). The active-site Proton donor is His323. Asp363 contacts Ni(2+).

This sequence belongs to the metallo-dependent hydrolases superfamily. Urease alpha subunit family. In terms of assembly, heterotrimer of UreA (gamma), UreB (beta) and UreC (alpha) subunits. Three heterotrimers associate to form the active enzyme. Ni cation serves as cofactor. Post-translationally, carboxylation allows a single lysine to coordinate two nickel ions.

The protein resides in the cytoplasm. It catalyses the reaction urea + 2 H2O + H(+) = hydrogencarbonate + 2 NH4(+). It participates in nitrogen metabolism; urea degradation; CO(2) and NH(3) from urea (urease route): step 1/1. In Bradyrhizobium diazoefficiens (strain JCM 10833 / BCRC 13528 / IAM 13628 / NBRC 14792 / USDA 110), this protein is Urease subunit alpha.